The following is an 824-amino-acid chain: Glycerol-3-phosphate acyltransferase (824 aa).

Positions 302–307 match the HXXXXD motif motif; the sequence is CHRSHM.

The protein belongs to the GPAT/DAPAT family.

The protein localises to the cell inner membrane. It carries out the reaction sn-glycerol 3-phosphate + an acyl-CoA = a 1-acyl-sn-glycero-3-phosphate + CoA. Its pathway is phospholipid metabolism; CDP-diacylglycerol biosynthesis; CDP-diacylglycerol from sn-glycerol 3-phosphate: step 1/3. In Actinobacillus pleuropneumoniae serotype 5b (strain L20), this protein is Glycerol-3-phosphate acyltransferase.